A 636-amino-acid polypeptide reads, in one-letter code: Interleukin-27 receptor subunit alpha (636 aa).

The N-terminal stretch at 1-32 is a signal peptide; the sequence is MRGGRGAPFWLWPLPKLALLPLLWVLFQRTRP. Over 33–516 the chain is Extracellular; the sequence is QGSAGPLQCY…HLPDNTLRWK (484 aa). Residues Asn-51 and Asn-76 are each glycosylated (N-linked (GlcNAc...) asparagine). The Fibronectin type-III 1 domain occupies 131-231; sequence PRLGPDVDFS…PILSFQTPPS (101 aa). The WSXWS motif signature appears at 217–221; the sequence is WGEWS. Residues Asn-302, Asn-311, Asn-374, Asn-382, and Asn-467 are each glycosylated (N-linked (GlcNAc...) asparagine). Fibronectin type-III domains lie at 322-417 and 419-511; these read APRS…LAPL and GPTL…LPDN. Residues 517–537 traverse the membrane as a helical segment; sequence VLPGILFLWGLFLLGCGLSLA. The Cytoplasmic segment spans residues 538–636; that stretch reads TSGRCYHLRH…LGPPRPQVLA (99 aa). The Box 1 motif signature appears at 554 to 562; that stretch reads VWEKVPDPA. The segment at 587-636 is disordered; sequence EVEEMEPPPVMESSQPAQATAPLDSGYEKHFLPTPEELGLLGPPRPQVLA. Residues 618 to 628 are compositionally biased toward low complexity; sequence LPTPEELGLLG.

The protein belongs to the type I cytokine receptor family. Type 2 subfamily. Component of a receptor complex composed of IL6ST/GP130, IL27RA/WSX1 and CNTFR which interacts with the neuroprotective peptide humanin. In terms of tissue distribution, highly expressed in lymphoid tissues such as spleen, lymph nodes and peripheral blood leukocytes. Weakly expressed in other tissues examined including heart, brain, fetal and adult lung, liver, skeletal muscle, kidney, pancreas, prostate, testis, ovary, small intestine, kidney and colon. In the lymphoid system, higher level expression in CD4+ T-cell subsets than in CD8+ T-cell subsets. Also weaker expression in CD19+ B-cells and monocytes.

The protein resides in the membrane. Its function is as follows. Receptor for IL27. Requires IL6ST/GP130 to mediate signal transduction in response to IL27. This signaling system acts through STAT3 and STAT1. Acts as a receptor for the neuroprotective peptide humanin as part of a complex with IL6ST/GP130 and CNTFR. Involved in the regulation of Th1-type immune responses. Also appears to be involved in innate defense mechanisms. The protein is Interleukin-27 receptor subunit alpha (IL27RA) of Homo sapiens (Human).